A 273-amino-acid polypeptide reads, in one-letter code: Mediator of RNA polymerase II transcription subunit 18 (273 aa).

Low complexity predominate over residues 90–106 (GAQSSAASSGDPDAPMS). The tract at residues 90 to 114 (GAQSSAASSGDPDAPMSGTDTGTNF) is disordered.

It belongs to the Mediator complex subunit 18 family. In terms of assembly, component of the Mediator complex.

Its subcellular location is the nucleus. Its function is as follows. Component of the Mediator complex, a coactivator involved in the regulated transcription of nearly all RNA polymerase II-dependent genes. Mediator functions as a bridge to convey information from gene-specific regulatory proteins to the basal RNA polymerase II transcription machinery. Mediator is recruited to promoters by direct interactions with regulatory proteins and serves as a scaffold for the assembly of a functional preinitiation complex with RNA polymerase II and the general transcription factors. This is Mediator of RNA polymerase II transcription subunit 18 (srb5) from Aspergillus oryzae (strain ATCC 42149 / RIB 40) (Yellow koji mold).